A 304-amino-acid chain; its full sequence is Tyrosine recombinase XerD (304 aa).

Residues 1–92 (MKARVLAKTW…VARGLHKFAL (92 aa)) form the Core-binding (CB) domain. In terms of domain architecture, Tyr recombinase spans 113–298 (HLPDTLSINE…TADSLREVWR (186 aa)). Active-site residues include arginine 156, lysine 180, histidine 250, arginine 253, and histidine 276. Tyrosine 285 serves as the catalytic O-(3'-phospho-DNA)-tyrosine intermediate.

Belongs to the 'phage' integrase family. XerD subfamily. As to quaternary structure, forms a cyclic heterotetrameric complex composed of two molecules of XerC and two molecules of XerD.

The protein localises to the cytoplasm. Its function is as follows. Site-specific tyrosine recombinase, which acts by catalyzing the cutting and rejoining of the recombining DNA molecules. The XerC-XerD complex is essential to convert dimers of the bacterial chromosome into monomers to permit their segregation at cell division. It also contributes to the segregational stability of plasmids. This Corynebacterium glutamicum (strain ATCC 13032 / DSM 20300 / JCM 1318 / BCRC 11384 / CCUG 27702 / LMG 3730 / NBRC 12168 / NCIMB 10025 / NRRL B-2784 / 534) protein is Tyrosine recombinase XerD.